A 318-amino-acid chain; its full sequence is Ribose-phosphate pyrophosphokinase 1 (318 aa).

Residues 43 to 45 (DGE) and 102 to 103 (RQ) each bind ATP. Mg(2+) contacts are provided by histidine 136 and aspartate 176. Lysine 199 is a catalytic residue. Residues arginine 201, aspartate 225, and 229–233 (DTAGT) each bind D-ribose 5-phosphate.

It belongs to the ribose-phosphate pyrophosphokinase family. Class I subfamily. As to quaternary structure, homohexamer. Mg(2+) is required as a cofactor.

The protein localises to the cytoplasm. It carries out the reaction D-ribose 5-phosphate + ATP = 5-phospho-alpha-D-ribose 1-diphosphate + AMP + H(+). Its pathway is metabolic intermediate biosynthesis; 5-phospho-alpha-D-ribose 1-diphosphate biosynthesis; 5-phospho-alpha-D-ribose 1-diphosphate from D-ribose 5-phosphate (route I): step 1/1. Involved in the biosynthesis of the central metabolite phospho-alpha-D-ribosyl-1-pyrophosphate (PRPP) via the transfer of pyrophosphoryl group from ATP to 1-hydroxyl of ribose-5-phosphate (Rib-5-P). This is Ribose-phosphate pyrophosphokinase 1 from Listeria monocytogenes serotype 4b (strain F2365).